Reading from the N-terminus, the 72-residue chain is MNFRFPFLLMITISLIGAVLTFGNDVRPRNQYGNEIFCPHQGFNQKCNAICKRKKYLLGFCDQKTCLCKVRP.

The N-terminal stretch at 1 to 21 (MNFRFPFLLMITISLIGAVLT) is a signal peptide. Cystine bridges form between C38–C61, C47–C66, and C51–C68.

The protein belongs to the long (3 C-C) scorpion toxin superfamily. Expressed by the venom gland.

It is found in the secreted. Functionally, binds to sodium channels (Nav) and affects the channel activation process. This chain is Putative sodium channel toxin Ts18, found in Tityus serrulatus (Brazilian scorpion).